The sequence spans 371 residues: Chaperone protein DnaJ (371 aa).

One can recognise a J domain in the interval 4–68; it reads DYYQILGVSK…QKRAAYDRFG (65 aa). A CR-type zinc finger spans residues 134 to 212; the sequence is GIEKNISFSS…CHGMGRYHKQ (79 aa). C147, C150, C164, C167, C186, C189, C200, and C203 together coordinate Zn(2+). 4 CXXCXGXG motif repeats span residues 147–154, 164–171, 186–193, and 200–207; these read CDTCHGTG, CDACGGVG, CHKCQGNG, and CKKCHGMG.

This sequence belongs to the DnaJ family. As to quaternary structure, homodimer. Zn(2+) serves as cofactor.

Its subcellular location is the cytoplasm. Participates actively in the response to hyperosmotic and heat shock by preventing the aggregation of stress-denatured proteins and by disaggregating proteins, also in an autonomous, DnaK-independent fashion. Unfolded proteins bind initially to DnaJ; upon interaction with the DnaJ-bound protein, DnaK hydrolyzes its bound ATP, resulting in the formation of a stable complex. GrpE releases ADP from DnaK; ATP binding to DnaK triggers the release of the substrate protein, thus completing the reaction cycle. Several rounds of ATP-dependent interactions between DnaJ, DnaK and GrpE are required for fully efficient folding. Also involved, together with DnaK and GrpE, in the DNA replication of plasmids through activation of initiation proteins. This chain is Chaperone protein DnaJ, found in Rickettsia felis (strain ATCC VR-1525 / URRWXCal2) (Rickettsia azadi).